Reading from the N-terminus, the 489-residue chain is Ribulose bisphosphate carboxylase large chain 2 (489 aa).

Asn-128 and Thr-178 together coordinate substrate. Lys-180 acts as the Proton acceptor in catalysis. Lys-182 is a binding site for substrate. Mg(2+) contacts are provided by Lys-206, Asp-208, and Glu-209. Lys-206 bears the N6-carboxylysine mark. His-298 serves as the catalytic Proton acceptor. Arg-299, His-331, and Ser-383 together coordinate substrate.

The protein belongs to the RuBisCO large chain family. Type I subfamily. As to quaternary structure, heterohexadecamer of 8 large chains and 8 small chains. Mg(2+) serves as cofactor.

It carries out the reaction 2 (2R)-3-phosphoglycerate + 2 H(+) = D-ribulose 1,5-bisphosphate + CO2 + H2O. The enzyme catalyses D-ribulose 1,5-bisphosphate + O2 = 2-phosphoglycolate + (2R)-3-phosphoglycerate + 2 H(+). In terms of biological role, ruBisCO catalyzes two reactions: the carboxylation of D-ribulose 1,5-bisphosphate, the primary event in carbon dioxide fixation, as well as the oxidative fragmentation of the pentose substrate. Both reactions occur simultaneously and in competition at the same active site. This Nitrobacter winogradskyi (strain ATCC 25391 / DSM 10237 / CIP 104748 / NCIMB 11846 / Nb-255) protein is Ribulose bisphosphate carboxylase large chain 2.